Here is a 96-residue protein sequence, read N- to C-terminus: Small ribosomal subunit protein bS18 (96 aa).

Positions 1–22 (MYKDIDSHQRDSRTDGHQDGFK) are enriched in basic and acidic residues. Positions 1–25 (MYKDIDSHQRDSRTDGHQDGFKKNP) are disordered.

It belongs to the bacterial ribosomal protein bS18 family. Part of the 30S ribosomal subunit. Forms a tight heterodimer with protein bS6.

Binds as a heterodimer with protein bS6 to the central domain of the 16S rRNA, where it helps stabilize the platform of the 30S subunit. This Borrelia duttonii (strain Ly) protein is Small ribosomal subunit protein bS18.